The chain runs to 242 residues: Zinc import ATP-binding protein ZnuC (242 aa).

The ABC transporter domain maps to 24–241; sequence INVENLSFFY…EKFLKMFSSY (218 aa). 56-63 is a binding site for ATP; it reads GPNGGGKT.

Belongs to the ABC transporter superfamily. Zinc importer (TC 3.A.1.15.5) family. The complex is composed of two ATP-binding proteins (ZnuC), two transmembrane proteins (ZnuB) and a solute-binding protein (ZnuA).

Its subcellular location is the cell inner membrane. It carries out the reaction Zn(2+)(out) + ATP(in) + H2O(in) = Zn(2+)(in) + ADP(in) + phosphate(in) + H(+)(in). Part of the ABC transporter complex ZnuABC involved in zinc import. Responsible for energy coupling to the transport system. The sequence is that of Zinc import ATP-binding protein ZnuC from Ehrlichia chaffeensis (strain ATCC CRL-10679 / Arkansas).